The chain runs to 872 residues: Rho guanine nucleotide exchange factor scd1 (872 aa).

The segment at 1–29 is disordered; that stretch reads MAYFQDRKTSSRSLPSYINHSTQNLVGPR. Polar residues predominate over residues 11 to 25; sequence SRSLPSYINHSTQNL. One can recognise a Calponin-homology (CH) domain in the interval 82-198; that stretch reads DSIHREALNS…TIELLLKKYE (117 aa). The region spanning 228-402 is the DH domain; it reads SGRRVTAELY…VRVANQVNET (175 aa). In terms of domain architecture, PH spans 426–547; sequence SLQYFGQLLV…WMSVLNRLLW (122 aa). 2 disordered regions span residues 553–667 and 743–765; these read SPKD…STAS and MKSDGSLLPSTKHTSLSSSSTST. Positions 560–584 are enriched in polar residues; sequence AASTPANPVYNRSSSQTSKGYNSSD. The residue at position 583 (S583) is a Phosphoserine. Residues 599-616 are compositionally biased toward low complexity; it reads SPTSISSPSSKSSPFTKT. A compositionally biased stretch (basic and acidic residues) spans 617 to 633; it reads TSKDTKSATTTDERPSD. 2 stretches are compositionally biased toward low complexity: residues 645 to 667 and 748 to 765; these read TSSLRTSQTTSTIVSNDSSSTAS and SLLPSTKHTSLSSSSTST. The 88-residue stretch at 772-859 folds into the PB1 domain; the sequence is TTNVKIRLRL…FELMDPVHNK (88 aa).

As to quaternary structure, scd1, scd2, cdc42, and ras1, in its GTP-bound state, act cooperatively to form a protein complex. Interacts with moe1 and cdc42.

The protein resides in the nucleus. It localises to the cytoplasm. Required for mating and morphogenesis. May contain a cryptic binding site for cdc42 that is enhanced by binding Ras. Interacts directly with scd2. Promotes the exchange of cdc42-bound GDP by GTP. Involved in septation and stimulates the elongation of conjugation tubes. In Schizosaccharomyces pombe (strain 972 / ATCC 24843) (Fission yeast), this protein is Rho guanine nucleotide exchange factor scd1 (scd1).